A 198-amino-acid polypeptide reads, in one-letter code: Sorcin (198 aa).

4 consecutive EF-hand domains span residues 45 to 64, 70 to 98, 100 to 135, and 151 to 169; these read QDGQ…SGIA, FNLE…FKEL, AVLN…MGFR, and SGKI…LRAL. Residues aspartate 83, aspartate 85, serine 87, threonine 89, glutamate 94, aspartate 113, aspartate 115, serine 117, threonine 119, and glutamate 124 each contribute to the Ca(2+) site. Serine 178 bears the Phosphoserine mark.

In terms of assembly, homodimer. Interacts with GCA, RYR2 and ANXA7. Detected in cardiac myocytes.

It localises to the cytoplasm. It is found in the sarcoplasmic reticulum membrane. Its function is as follows. Calcium-binding protein that modulates excitation-contraction coupling in the heart. Contributes to calcium homeostasis in the heart sarcoplasmic reticulum. Modulates the activity of RYR2 calcium channels. The protein is Sorcin (Sri) of Mus musculus (Mouse).